The primary structure comprises 191 residues: Ribosome hibernation promotion factor (191 aa).

The disordered stretch occupies residues 100-123; that stretch reads KQRQEGRPEPLPGPAEAEVNAQGS.

The protein belongs to the HPF/YfiA ribosome-associated protein family. Long HPF subfamily. Interacts with 100S ribosomes.

Its subcellular location is the cytoplasm. Functionally, required for dimerization of active 70S ribosomes into 100S ribosomes in stationary phase; 100S ribosomes are translationally inactive and sometimes present during exponential growth. The sequence is that of Ribosome hibernation promotion factor from Deinococcus radiodurans (strain ATCC 13939 / DSM 20539 / JCM 16871 / CCUG 27074 / LMG 4051 / NBRC 15346 / NCIMB 9279 / VKM B-1422 / R1).